The chain runs to 80 residues: MGSDLPVLNALNNSNRAIFVPIGPSNCGYSVLLIDILILLSGNRGSTSFKNKSLITSGLFINKNLAILYILLLSNLAIVL.

This is an uncharacterized protein from Vaccinia virus (strain Western Reserve) (VACV).